Reading from the N-terminus, the 275-residue chain is Undecaprenyl-diphosphatase (275 aa).

The next 8 membrane-spanning stretches (helical) occupy residues I4–P24, L54–L74, L92–Y112, Y123–D143, I154–F174, A194–L214, M228–W248, and S255–I275.

It belongs to the UppP family.

Its subcellular location is the cell membrane. The enzyme catalyses di-trans,octa-cis-undecaprenyl diphosphate + H2O = di-trans,octa-cis-undecaprenyl phosphate + phosphate + H(+). Its function is as follows. Catalyzes the dephosphorylation of undecaprenyl diphosphate (UPP). Confers resistance to bacitracin. The sequence is that of Undecaprenyl-diphosphatase from Baumannia cicadellinicola subsp. Homalodisca coagulata.